The sequence spans 64 residues: UPF0434 protein BOV_A0835 (64 aa).

The protein belongs to the UPF0434 family.

In Brucella ovis (strain ATCC 25840 / 63/290 / NCTC 10512), this protein is UPF0434 protein BOV_A0835.